The sequence spans 437 residues: Serine carboxypeptidase-like 7 (437 aa).

The first 25 residues, 1–25 (MANDYVSTVLLLLSLLIFLSQRTDS), serve as a signal peptide directing secretion. Cystine bridges form between C84-C327, C248-C262, and C286-C293. N105 carries N-linked (GlcNAc...) asparagine glycosylation. S180 is an active-site residue. N346 carries an N-linked (GlcNAc...) asparagine glycan. The active site involves D362. N378 carries an N-linked (GlcNAc...) asparagine glycan. The active site involves H415.

The protein belongs to the peptidase S10 family. In terms of tissue distribution, ubiquitous.

It localises to the secreted. Functionally, probable carboxypeptidase. The sequence is that of Serine carboxypeptidase-like 7 (SCPL7) from Arabidopsis thaliana (Mouse-ear cress).